The sequence spans 152 residues: Ferredoxin-thioredoxin reductase catalytic chain, chloroplastic (152 aa).

The N-terminal 38 residues, 1 to 38 (MTSTVTTTVGCGGLPVRPLSTATRGRPRRCAVRAQAAG), are a transit peptide targeting the chloroplast. C91 lines the [4Fe-4S] cluster pocket. The active-site Nucleophile is the C93. A disulfide bridge connects residues C93 and C123. [4Fe-4S] cluster contacts are provided by C110, C112, and C121.

Belongs to the ferredoxin thioredoxin reductase beta subunit family. As to quaternary structure, heterodimer of subunit A (variable subunit) and subunit B (catalytic subunit). Heterodimeric FTR forms a complex with ferredoxin and thioredoxin. Requires [4Fe-4S] cluster as cofactor.

It is found in the plastid. The protein resides in the chloroplast. It carries out the reaction [thioredoxin]-disulfide + 2 reduced [2Fe-2S]-[ferredoxin] + 2 H(+) = [thioredoxin]-dithiol + 2 oxidized [2Fe-2S]-[ferredoxin]. Catalytic subunit of the ferredoxin-thioredoxin reductase (FTR), which catalyzes the two-electron reduction of thioredoxins by the electrons provided by reduced ferredoxin. This chain is Ferredoxin-thioredoxin reductase catalytic chain, chloroplastic (FTRC), found in Zea mays (Maize).